A 239-amino-acid chain; its full sequence is Uridylate kinase (239 aa).

13 to 16 (KVSG) lines the ATP pocket. Gly-55 serves as a coordination point for UMP. Gly-56 and Arg-60 together coordinate ATP. Residues Asp-75 and 136 to 143 (TGNPFFTT) each bind UMP. Residues Thr-163, Gln-164, Tyr-169, and Asp-172 each coordinate ATP.

Belongs to the UMP kinase family. In terms of assembly, homohexamer.

Its subcellular location is the cytoplasm. It carries out the reaction UMP + ATP = UDP + ADP. It participates in pyrimidine metabolism; CTP biosynthesis via de novo pathway; UDP from UMP (UMPK route): step 1/1. Inhibited by UTP. Catalyzes the reversible phosphorylation of UMP to UDP. In Bartonella quintana (strain Toulouse) (Rochalimaea quintana), this protein is Uridylate kinase.